The sequence spans 150 residues: Large ribosomal subunit protein bL9 (150 aa).

This sequence belongs to the bacterial ribosomal protein bL9 family.

Functionally, binds to the 23S rRNA. The polypeptide is Large ribosomal subunit protein bL9 (Shewanella sp. (strain MR-4)).